The following is a 435-amino-acid chain: Tektin-4 (435 aa).

Positions 60–69 (DQSERQRHES) are enriched in basic and acidic residues. A disordered region spans residues 60-96 (DQSERQRHESQQLATETQALAQRTQQDSTRTVGERLQ). Positions 70-85 (QQLATETQALAQRTQQ) are enriched in low complexity. Coiled coils occupy residues 102 to 180 (KSEL…LLKR), 310 to 336 (LHKT…DKEA), and 363 to 411 (FRLL…TNSL).

The protein belongs to the tektin family. In terms of assembly, microtubule inner protein component of sperm flagellar doublet microtubules. In terms of processing, ubiquitinated, leading to its degradation. Deubiquitinated by USP16, promoting its stability. Strongly expressed in spermatozoa. Also detected at low levels in pancreas. Expressed in airway epithelial cells.

It localises to the cytoplasm. It is found in the cytoskeleton. Its subcellular location is the cilium axoneme. The protein localises to the flagellum axoneme. Functionally, microtubule inner protein (MIP) part of the dynein-decorated doublet microtubules (DMTs) in cilia and flagellar axoneme. Forms filamentous polymers in the walls of ciliary and flagellar microtubules. Contributes to normal sperm motility. In Homo sapiens (Human), this protein is Tektin-4.